Reading from the N-terminus, the 363-residue chain is NADH-quinone oxidoreductase subunit H (363 aa).

A run of 10 helical transmembrane segments spans residues 29 to 49 (VLKI…YVVW), 62 to 82 (GPMY…KLLF), 96 to 116 (FIIA…VVPF), 127 to 147 (VGLL…ILAG), 163 to 183 (AAQV…VMIA), 202 to 222 (FFDW…VSGV), 239 to 257 (IVAG…LFFL), 264 to 286 (ILVS…QGWV), 299 to 319 (TGGW…YIWF), and 339 to 359 (FIPL…YGVI).

This sequence belongs to the complex I subunit 1 family. As to quaternary structure, NDH-1 is composed of 14 different subunits. Subunits NuoA, H, J, K, L, M, N constitute the membrane sector of the complex.

The protein resides in the cell inner membrane. The catalysed reaction is a quinone + NADH + 5 H(+)(in) = a quinol + NAD(+) + 4 H(+)(out). Functionally, NDH-1 shuttles electrons from NADH, via FMN and iron-sulfur (Fe-S) centers, to quinones in the respiratory chain. The immediate electron acceptor for the enzyme in this species is believed to be ubiquinone. Couples the redox reaction to proton translocation (for every two electrons transferred, four hydrogen ions are translocated across the cytoplasmic membrane), and thus conserves the redox energy in a proton gradient. This subunit may bind ubiquinone. In Xanthomonas campestris pv. campestris (strain 8004), this protein is NADH-quinone oxidoreductase subunit H.